A 262-amino-acid chain; its full sequence is 3-methyl-2-oxobutanoate hydroxymethyltransferase (262 aa).

D42 and D81 together coordinate Mg(2+). Residues 42 to 43 (DS), D81, and K110 contribute to the 3-methyl-2-oxobutanoate site. Residue E112 participates in Mg(2+) binding. E180 functions as the Proton acceptor in the catalytic mechanism.

The protein belongs to the PanB family. As to quaternary structure, homodecamer; pentamer of dimers. Mg(2+) is required as a cofactor.

It localises to the cytoplasm. It catalyses the reaction 3-methyl-2-oxobutanoate + (6R)-5,10-methylene-5,6,7,8-tetrahydrofolate + H2O = 2-dehydropantoate + (6S)-5,6,7,8-tetrahydrofolate. It participates in cofactor biosynthesis; (R)-pantothenate biosynthesis; (R)-pantoate from 3-methyl-2-oxobutanoate: step 1/2. Catalyzes the reversible reaction in which hydroxymethyl group from 5,10-methylenetetrahydrofolate is transferred onto alpha-ketoisovalerate to form ketopantoate. The protein is 3-methyl-2-oxobutanoate hydroxymethyltransferase of Legionella pneumophila subsp. pneumophila (strain Philadelphia 1 / ATCC 33152 / DSM 7513).